A 393-amino-acid chain; its full sequence is Na(+)/H(+) antiporter NhaA 2 (393 aa).

A run of 11 helical transmembrane segments spans residues S18 to L38, L53 to L73, I91 to F111, G120 to G140, V149 to F169, T172 to L192, L208 to L228, F263 to M283, V294 to V314, G332 to F352, and I363 to S383.

This sequence belongs to the NhaA Na(+)/H(+) (TC 2.A.33) antiporter family.

The protein resides in the cell inner membrane. The enzyme catalyses Na(+)(in) + 2 H(+)(out) = Na(+)(out) + 2 H(+)(in). Its function is as follows. Na(+)/H(+) antiporter that extrudes sodium in exchange for external protons. This is Na(+)/H(+) antiporter NhaA 2 from Brucella anthropi (strain ATCC 49188 / DSM 6882 / CCUG 24695 / JCM 21032 / LMG 3331 / NBRC 15819 / NCTC 12168 / Alc 37) (Ochrobactrum anthropi).